Here is a 297-residue protein sequence, read N- to C-terminus: Ezy-1 protein (297 aa).

Disordered regions lie at residues methionine 1–glycine 34, phenylalanine 115–serine 151, and glutamine 255–methionine 297. Positions alanine 123–glutamate 135 are enriched in acidic residues. Positions alanine 136–serine 150 are enriched in low complexity. A compositionally biased stretch (basic and acidic residues) spans aspartate 259–glutamate 269.

In Chlamydomonas reinhardtii (Chlamydomonas smithii), this protein is Ezy-1 protein (Ezy-1).